Here is a 667-residue protein sequence, read N- to C-terminus: DNA ligase (667 aa).

Residues 34–38 (DYEFD), 83–84 (SL), and E117 each bind NAD(+). K119 acts as the N6-AMP-lysine intermediate in catalysis. The NAD(+) site is built by R140, E176, K289, and K313. Positions 407, 410, 425, and 431 each coordinate Zn(2+). One can recognise a BRCT domain in the interval 591–667 (QVNRNFEGMS…ISEDEFMGMM (77 aa)).

The protein belongs to the NAD-dependent DNA ligase family. LigA subfamily. Mg(2+) serves as cofactor. Requires Mn(2+) as cofactor.

The enzyme catalyses NAD(+) + (deoxyribonucleotide)n-3'-hydroxyl + 5'-phospho-(deoxyribonucleotide)m = (deoxyribonucleotide)n+m + AMP + beta-nicotinamide D-nucleotide.. Functionally, DNA ligase that catalyzes the formation of phosphodiester linkages between 5'-phosphoryl and 3'-hydroxyl groups in double-stranded DNA using NAD as a coenzyme and as the energy source for the reaction. It is essential for DNA replication and repair of damaged DNA. This Chlorobium chlorochromatii (strain CaD3) protein is DNA ligase.